A 119-amino-acid polypeptide reads, in one-letter code: Large ribosomal subunit protein uL18 (119 aa).

Belongs to the universal ribosomal protein uL18 family. In terms of assembly, part of the 50S ribosomal subunit; part of the 5S rRNA/L5/L18/L25 subcomplex. Contacts the 5S and 23S rRNAs.

Functionally, this is one of the proteins that bind and probably mediate the attachment of the 5S RNA into the large ribosomal subunit, where it forms part of the central protuberance. The protein is Large ribosomal subunit protein uL18 of Staphylococcus aureus (strain bovine RF122 / ET3-1).